A 658-amino-acid chain; its full sequence is Transcription factor E2-alpha (658 aa).

6 disordered regions span residues 42–82 (STQF…GTHY), 140–191 (SALS…YPAN), 276–313 (NPSV…GTAT), 331–372 (DHSS…SYDG), 460–558 (VPAQ…ERRV), and 628–658 (EEEK…VGHM). The short motif at 173–179 (PKKVRKV) is the Nuclear localization signal element. Residues 276–303 (NPSVTSSFSSTPAQYGVSSHTPPISTGD) are compositionally biased toward polar residues. Positions 333–344 (SSTNFSSTPSTP) are enriched in low complexity. Residues 345–355 (VGSPQGITGSG) are compositionally biased toward polar residues. Over residues 493 to 507 (PDIKRESKEDEENRS) the composition is skewed to basic and acidic residues. A compositionally biased stretch (acidic residues) spans 533 to 544 (QDEDEDEDDDNL). Basic and acidic residues predominate over residues 548–558 (QKAEREKERRV). The bHLH domain maps to 555–608 (ERRVANNARERLRVKDINEAFKELGRMCQLHLNSEKPQTKLLILHQAVSVILSL).

In terms of assembly, homodimer. Heterodimer; efficient DNA binding requires dimerization with another bHLH protein. Interacts with tgfb1i1.

Its subcellular location is the nucleus. Functionally, transcriptional regulator involved in the initiation of neuronal differentiation and mesenchymal to epithelial transition. Heterodimers between tcf3 and tissue-specific basic helix-loop-helix (bHLH) proteins play major roles in determining tissue-specific cell fate during embryogenesis, like muscle or early B-cell differentiation. Together with tcf15, required for the mesenchymal to epithelial transition. Dimers bind DNA on E-box motifs: 5'-CANNTG-3'. The polypeptide is Transcription factor E2-alpha (tcf3) (Xenopus laevis (African clawed frog)).